The following is an 852-amino-acid chain: Disks large homolog 2 (852 aa).

S-palmitoyl cysteine attachment occurs at residues Cys-5 and Cys-7. Ser-28 is modified (phosphoserine). Tyr-58 bears the Phosphotyrosine mark. Position 65 is a phosphoserine (Ser-65). PDZ domains are found at residues 98–185 (EITL…RRRR) and 193–280 (EIKL…GKPT). 6 positions are modified to phosphoserine: Ser-307, Ser-328, Ser-360, Ser-365, Ser-406, and Ser-414. The region spanning 421–502 (KVVLHKGSTG…TVTIIAQYQP (82 aa)) is the PDZ 3 domain. Tyr-505 carries the phosphotyrosine modification. A phosphoserine mark is found at Ser-528, Ser-530, and Ser-553. The region spanning 536 to 606 (KRSLYVRAMF…PSKRRVERKE (71 aa)) is the SH3 domain. Positions 662 to 837 (TRPVIILGPM…IYNQCKLVIE (176 aa)) constitute a Guanylate kinase-like domain. A phosphotyrosine mark is found at Tyr-732 and Tyr-737.

Interacts with NOS1/nNOS through second PDZ domain. Interacts with KCNJ2/Kir2.1 (via C-terminus) through one of its PDZ domains. Interacts with KCNJ4. Interacts with FRMPD4 (via C-terminus). Interacts through its PDZ domains with NETO1. Interacts with LRFN1, LRFN2 and LRFN4. Interacts with FASLG. Interacts with KCNJ4. Interacts with ADAM22. Interacts with DGKI (via PDZ-binding motif). Post-translationally, palmitoylation of isoform 1 and isoform 2 is not required for targeting to postsynaptic density. As to expression, brain. Highest levels of isoform 1 in cortex, olfactory bulb, thalamus, hypothalamus, striatum and hippocampus. Highest level of isoform 2 in olfactory bulb. Reduced levels in cortex and hippocampus. Highest level of isoform 4 in spinal cord. Low levels of isoform 4, isoform 6, and isoform 7 in superior cervical ganglion.

It localises to the cell membrane. Its subcellular location is the postsynaptic density. It is found in the synapse. The protein localises to the membrane. The protein resides in the cell projection. It localises to the axon. Its subcellular location is the perikaryon. Functionally, required for perception of chronic pain through NMDA receptor signaling. Regulates surface expression of NMDA receptors in dorsal horn neurons of the spinal cord. Interacts with the cytoplasmic tail of NMDA receptor subunits as well as inward rectifying potassium channels. Involved in regulation of synaptic stability at cholinergic synapses. Part of the postsynaptic protein scaffold of excitatory synapses. In Mus musculus (Mouse), this protein is Disks large homolog 2 (Dlg2).